An 84-amino-acid chain; its full sequence is MDSFSSSSGSPPNTEALMDQIKAQLAQAYAQEFLETVGNKCFAKCVTKPGSSLSGSESSCISRCVDRYIEATGIVSRALFSSTR.

The Twin CX3C motif motif lies at 41–64 (CFAKCVTKPGSSLSGSESSCISRC). Disulfide bonds link cysteine 41/cysteine 64 and cysteine 45/cysteine 60.

Belongs to the small Tim family. Heterohexamer; composed of 3 copies of TIM8 and 3 copies of TIM13, named soluble 70 kDa complex. Associates with the TIM22 complex, whose core is composed of TIM22.

It localises to the mitochondrion intermembrane space. Mitochondrial intermembrane chaperone that participates in the import and insertion of some multi-pass transmembrane proteins into the mitochondrial inner membrane. Also required for the transfer of beta-barrel precursors from the TOM complex to the sorting and assembly machinery (SAM complex) of the outer membrane. Acts as a chaperone-like protein that protects the hydrophobic precursors from aggregation and guide them through the mitochondrial intermembrane space. The TIM8-TIM13 complex mediates the import of some proteins while the predominant TIM9-TIM10 70 kDa complex mediates the import of much more proteins. This chain is Mitochondrial import inner membrane translocase subunit Tim13 (TIM13), found in Oryza sativa subsp. japonica (Rice).